The sequence spans 238 residues: uncharacterized protein (238 aa).

A disordered region spans residues 219–238; the sequence is EESINNNVDDTDDIDNDNFI. A compositionally biased stretch (acidic residues) spans 227–238; sequence DDTDDIDNDNFI.

This is an uncharacterized protein from Buchnera aphidicola subsp. Acyrthosiphon pisum (strain APS) (Acyrthosiphon pisum symbiotic bacterium).